The following is a 153-amino-acid chain: NADPH-dependent 7-cyano-7-deazaguanine reductase (153 aa).

The tract at residues 1 to 22 (MTDNRYDNLGQLGTSTPLPDNP) is disordered. C51 (thioimide intermediate) is an active-site residue. D58 serves as the catalytic Proton donor. Residues 73 to 75 (VES) and 92 to 93 (HE) contribute to the substrate site.

The protein belongs to the GTP cyclohydrolase I family. QueF type 1 subfamily.

The protein localises to the cytoplasm. It catalyses the reaction 7-aminomethyl-7-carbaguanine + 2 NADP(+) = 7-cyano-7-deazaguanine + 2 NADPH + 3 H(+). It participates in tRNA modification; tRNA-queuosine biosynthesis. In terms of biological role, catalyzes the NADPH-dependent reduction of 7-cyano-7-deazaguanine (preQ0) to 7-aminomethyl-7-deazaguanine (preQ1). This chain is NADPH-dependent 7-cyano-7-deazaguanine reductase, found in Maricaulis maris (strain MCS10) (Caulobacter maris).